The sequence spans 121 residues: ATP synthase epsilon chain (121 aa).

This sequence belongs to the ATPase epsilon chain family. As to quaternary structure, F-type ATPases have 2 components, CF(1) - the catalytic core - and CF(0) - the membrane proton channel. CF(1) has five subunits: alpha(3), beta(3), gamma(1), delta(1), epsilon(1). CF(0) has three main subunits: a, b and c.

The protein localises to the cell membrane. Its function is as follows. Produces ATP from ADP in the presence of a proton gradient across the membrane. This is ATP synthase epsilon chain from Mycobacterium leprae (strain Br4923).